We begin with the raw amino-acid sequence, 96 residues long: Co-chaperonin GroES (96 aa).

Residues 26 to 48 are disordered; it reads LLPGSAQEKPSQGEVLATGNGQI.

The protein belongs to the GroES chaperonin family. In terms of assembly, heptamer of 7 subunits arranged in a ring. Interacts with the chaperonin GroEL.

It localises to the cytoplasm. Its function is as follows. Together with the chaperonin GroEL, plays an essential role in assisting protein folding. The GroEL-GroES system forms a nano-cage that allows encapsulation of the non-native substrate proteins and provides a physical environment optimized to promote and accelerate protein folding. GroES binds to the apical surface of the GroEL ring, thereby capping the opening of the GroEL channel. The polypeptide is Co-chaperonin GroES (Psychrobacter arcticus (strain DSM 17307 / VKM B-2377 / 273-4)).